A 142-amino-acid chain; its full sequence is Biogenesis of lysosome-related organelles complex 1 subunit 2 (142 aa).

Residues 1-33 (MAAAAEGVLATRSDEPARDDAAVETAEEAKEPA) are disordered. Ala-2 is modified (N-acetylalanine). A compositionally biased stretch (basic and acidic residues) spans 12–33 (RSDEPARDDAAVETAEEAKEPA). The stretch at 79–127 (EMKDIAINISRNLKDLNQKYAGLQPYLDQINVIEEQVAALEQAAYKLDA) forms a coiled coil.

Belongs to the BLOC1S2 family. Component of the biogenesis of lysosome-related organelles complex 1 (BLOC-1) composed of BLOC1S1, BLOC1S2, BLOC1S3, BLOC1S4, BLOC1S5, BLOC1S6, DTNBP1/BLOC1S7 and SNAPIN/BLOC1S8. Octamer composed of one copy each BLOC1S1, BLOC1S2, BLOC1S3, BLOC1S4, BLOC1S5, BLOC1S6, DTNBP1/BLOC1S7 and SNAPIN/BLOC1S8. Interacts directly with BLOC1S1, BLOC1S3, BLOC1S4, BLOC1S5 and SNAPIN. The BLOC-1 complex associates with the AP-3 protein complex and membrane protein cargos. Component of the BLOC-one-related complex (BORC) which is composed of BLOC1S1, BLOC1S2, BORCS5, BORCS6, BORCS7, BORCS8, KXD1 and SNAPIN. Interacts with gamma-tubulin. Interacts with IFT57. As to expression, isoform 1 and isoform 2 are widely expressed. Expressed in various malignant tumor tissues (at protein level).

Its subcellular location is the cytoplasm. The protein resides in the cytoskeleton. It is found in the microtubule organizing center. It localises to the centrosome. The protein localises to the lysosome membrane. Component of the BLOC-1 complex, a complex that is required for normal biogenesis of lysosome-related organelles (LRO), such as platelet dense granules and melanosomes. In concert with the AP-3 complex, the BLOC-1 complex is required to target membrane protein cargos into vesicles assembled at cell bodies for delivery into neurites and nerve terminals. The BLOC-1 complex, in association with SNARE proteins, is also proposed to be involved in neurite extension. As part of the BORC complex may play a role in lysosomes movement and localization at the cell periphery. Associated with the cytosolic face of lysosomes, the BORC complex may recruit ARL8B and couple lysosomes to microtubule plus-end-directed kinesin motor. May play a role in cell proliferation. In Homo sapiens (Human), this protein is Biogenesis of lysosome-related organelles complex 1 subunit 2 (BLOC1S2).